The chain runs to 974 residues: Mediator of RNA polymerase II transcription subunit 16 (974 aa).

Positions 62 to 92 are disordered; sequence ESSSTLSTHSTTTSVNGSTTAGVGSTPNFGG. A compositionally biased stretch (low complexity) spans 63–75; sequence SSSTLSTHSTTTS. The segment covering 76 to 92 has biased composition (polar residues); sequence VNGSTTAGVGSTPNFGG. Positions 889–893 match the Nuclear localization signal motif; it reads KLPIK.

The protein belongs to the Mediator complex subunit 16 family. Component of the Mediator complex, which is composed of at least 21 subunits that form three structurally distinct submodules. The Mediator head module contains MED6, MED8, MED11, SRB4/MED17, SRB5/MED18, ROX3/MED19, SRB2/MED20 and SRB6/MED22, the middle module contains MED1, MED4, NUT1/MED5, MED7, CSE2/MED9, NUT2/MED10, SRB7/MED21 and SOH1/MED31, and the tail module contains MED2, PGD1/MED3, RGR1/MED14, GAL11/MED15 and SIN4/MED16. The head and the middle modules interact directly with RNA polymerase II, whereas the elongated tail module interacts with gene-specific regulatory proteins. Interacts with HOG1. In terms of processing, phosphorylated by KIN28.

The protein resides in the nucleus. Component of the Mediator complex, a coactivator involved in the regulated transcription of nearly all RNA polymerase II-dependent genes. Mediator functions as a bridge to convey information from gene-specific regulatory proteins to the basal RNA polymerase II transcription machinery. The Mediator complex, having a compact conformation in its free form, is recruited to promoters by direct interactions with regulatory proteins and serves for the assembly of a functional preinitiation complex with RNA polymerase II and the general transcription factors. The Mediator complex unfolds to an extended conformation and partially surrounds RNA polymerase II, specifically interacting with the unphosphorylated form of the C-terminal domain (CTD) of RNA polymerase II. The Mediator complex dissociates from the RNA polymerase II holoenzyme and stays at the promoter when transcriptional elongation begins. The chain is Mediator of RNA polymerase II transcription subunit 16 (SIN4) from Saccharomyces cerevisiae (strain ATCC 204508 / S288c) (Baker's yeast).